The sequence spans 348 residues: Erythronate-4-phosphate dehydrogenase (348 aa).

Thr46 and Thr67 together coordinate substrate. Asp147 lines the NAD(+) pocket. The active site involves Arg209. Asp233 lines the NAD(+) pocket. The active site involves Glu238. His255 (proton donor) is an active-site residue. Gly258 contributes to the NAD(+) binding site. Residue Tyr259 coordinates substrate.

The protein belongs to the D-isomer specific 2-hydroxyacid dehydrogenase family. PdxB subfamily. Homodimer.

The protein resides in the cytoplasm. It catalyses the reaction 4-phospho-D-erythronate + NAD(+) = (R)-3-hydroxy-2-oxo-4-phosphooxybutanoate + NADH + H(+). The protein operates within cofactor biosynthesis; pyridoxine 5'-phosphate biosynthesis; pyridoxine 5'-phosphate from D-erythrose 4-phosphate: step 2/5. Its function is as follows. Catalyzes the oxidation of erythronate-4-phosphate to 3-hydroxy-2-oxo-4-phosphonooxybutanoate. This chain is Erythronate-4-phosphate dehydrogenase, found in Bacteroides fragilis (strain YCH46).